The sequence spans 414 residues: Glucose-1-phosphate adenylyltransferase (414 aa).

Residues glycine 164, 184 to 185, and serine 204 contribute to the alpha-D-glucose 1-phosphate site; that span reads EK.

The protein belongs to the bacterial/plant glucose-1-phosphate adenylyltransferase family. As to quaternary structure, homotetramer.

The catalysed reaction is alpha-D-glucose 1-phosphate + ATP + H(+) = ADP-alpha-D-glucose + diphosphate. The protein operates within glycan biosynthesis; glycogen biosynthesis. Functionally, involved in the biosynthesis of ADP-glucose, a building block required for the elongation reactions to produce glycogen. Catalyzes the reaction between ATP and alpha-D-glucose 1-phosphate (G1P) to produce pyrophosphate and ADP-Glc. This chain is Glucose-1-phosphate adenylyltransferase, found in Acidothermus cellulolyticus (strain ATCC 43068 / DSM 8971 / 11B).